The sequence spans 378 residues: MQRHATVLLPAKERFVMKIGVFVPIGNNGWLISTHAPQYMPTFELNKAIVQKAEQQQFDFALSMIKLRGFGGKTEFWDHNLESFTLMAGLAAVTSRIQIYATAATLTLPPAIVARMASTIDSISGGRFGVNLVTGWQKPEYEQMGLWPGDEYFSRRYDYLTEYVHVLRDLWDTGQSDFKGDYFTMNDCRVSPRPQQPMKVICAGQSDAGMAFSAQHADYNFCFGKGVNTPAAFAPTAARMKAAADKAGRNVGSYVLFMVIADETDDAARAKWEHYKAGADEEALSWLTEQSQKDTRSGADTNVRQMADPTSAVNINMGTLVGSYASVARMLDEVAAVPGTEGVLLTFDDFLTGIDAFGEHIQPLMRCRDHLRVTQEVA.

FMN contacts are provided by residues I65–K66, N131, E140, R156–Y157, and S206.

The protein belongs to the NtaA/SnaA/DszA monooxygenase family. RutA subfamily.

It carries out the reaction uracil + FMNH2 + NADH + O2 = (Z)-3-ureidoacrylate + FMN + NAD(+) + H2O + H(+). The catalysed reaction is thymine + FMNH2 + NADH + O2 = (Z)-2-methylureidoacrylate + FMN + NAD(+) + H2O + H(+). In terms of biological role, catalyzes the pyrimidine ring opening between N-3 and C-4 by an unusual flavin hydroperoxide-catalyzed mechanism, adding oxygen atoms in the process to yield ureidoacrylate peracid, that immediately reacts with FMN forming ureidoacrylate and FMN-N(5)-oxide. The FMN-N(5)-oxide reacts spontaneously with NADH to produce FMN. Requires the flavin reductase RutF to regenerate FMN in vivo. In Cronobacter turicensis (strain DSM 18703 / CCUG 55852 / LMG 23827 / z3032), this protein is Pyrimidine monooxygenase RutA.